The primary structure comprises 379 residues: Cytochrome b (379 aa).

Helical transmembrane passes span 33-53, 77-98, 113-133, and 178-198; these read FGSLLGMCLVIQILTGLFLAM, WLIRYLHANGASMFFICLFIHV, WNIGIILLLTTMATAFVGYVL, and FFAFHFILPFIIAAFALVHLL. Heme b contacts are provided by His83 and His97. Heme b is bound by residues His182 and His196. His201 contacts a ubiquinone. Transmembrane regions (helical) follow at residues 226–246, 288–308, 320–340, and 347–367; these read IKDLLGIFLLLLILMALALFF, LGGVLALILSILILAAFPLLN, VTQTIYWIFIANLLVLTWIGG, and FTMIGQIASVTYFTIITILIP.

The protein belongs to the cytochrome b family. As to quaternary structure, the cytochrome bc1 complex contains 11 subunits: 3 respiratory subunits (MT-CYB, CYC1 and UQCRFS1), 2 core proteins (UQCRC1 and UQCRC2) and 6 low-molecular weight proteins (UQCRH/QCR6, UQCRB/QCR7, UQCRQ/QCR8, UQCR10/QCR9, UQCR11/QCR10 and a cleavage product of UQCRFS1). This cytochrome bc1 complex then forms a dimer. Requires heme b as cofactor.

The protein resides in the mitochondrion inner membrane. In terms of biological role, component of the ubiquinol-cytochrome c reductase complex (complex III or cytochrome b-c1 complex) that is part of the mitochondrial respiratory chain. The b-c1 complex mediates electron transfer from ubiquinol to cytochrome c. Contributes to the generation of a proton gradient across the mitochondrial membrane that is then used for ATP synthesis. This is Cytochrome b (MT-CYB) from Akodon philipmyersi (Myers' grass mouse).